The primary structure comprises 382 residues: Na(+)/H(+) antiporter NhaA (382 aa).

Helical transmembrane passes span 14 to 34 (AGGI…NSSL), 49 to 69 (MSVS…LIGL), 87 to 107 (IFPA…YVAF), 117 to 137 (GWAI…ALLG), 146 to 166 (VFLL…IAFF), 171 to 191 (LSVL…LLNA), 205 to 225 (FILW…GVVL), 252 to 272 (VAFA…LEGV), 285 to 305 (VALG…YLAV), 321 to 341 (IFAV…ISSL), and 356 to 376 (LGIL…LSIS).

This sequence belongs to the NhaA Na(+)/H(+) (TC 2.A.33) antiporter family.

The protein resides in the cell inner membrane. The enzyme catalyses Na(+)(in) + 2 H(+)(out) = Na(+)(out) + 2 H(+)(in). In terms of biological role, na(+)/H(+) antiporter that extrudes sodium in exchange for external protons. The protein is Na(+)/H(+) antiporter NhaA of Aliivibrio fischeri (strain ATCC 700601 / ES114) (Vibrio fischeri).